Reading from the N-terminus, the 821-residue chain is Leucine--tRNA ligase (821 aa).

A 'HIGH' region motif is present at residues 44–54 (PYPSGRIHMGH). The 'KMSKS' region signature appears at 589 to 593 (KMSKS). Residue Lys592 coordinates ATP.

This sequence belongs to the class-I aminoacyl-tRNA synthetase family.

The protein localises to the cytoplasm. It carries out the reaction tRNA(Leu) + L-leucine + ATP = L-leucyl-tRNA(Leu) + AMP + diphosphate. This is Leucine--tRNA ligase from Campylobacter curvus (strain 525.92).